An 880-amino-acid polypeptide reads, in one-letter code: Nonsense-mediated mRNA decay factor SMG7-like (880 aa).

TPR repeat units follow at residues 149–183 (QEQY…NPHN) and 184–217 (QLAV…GASN). Residues 669 to 711 (RLGLSKPNGLGPIDETGPVSAFDSLSINSSTEHPASSYSPPTP) form a disordered region. The span at 691–701 (DSLSINSSTEH) shows a compositional bias: polar residues.

In terms of biological role, may play a role in growth and development. The sequence is that of Nonsense-mediated mRNA decay factor SMG7-like from Arabidopsis thaliana (Mouse-ear cress).